The following is a 1500-amino-acid chain: Host cell factor (1500 aa).

Kelch repeat units follow at residues 85-133 (LMVV…VEGT), 135-181 (MFVF…RLGH), 189-237 (KIFL…TYGD), 259-307 (NLLI…MIGN), and 308-373 (KMYV…GIQS). Serine 477 carries the post-translational modification Phosphoserine. The segment covering 517-528 (LLQSMSQPSSPA) has biased composition (polar residues). The segment at 517–543 (LLQSMSQPSSPASRADKDPLSSGGGTT) is disordered. Serine 958 and serine 966 each carry phosphoserine. Residues 1024-1061 (SEGQHGSEENENNGENATSSSASALFTGGDTAGPSRAQ) form a disordered region. Over residues 1036–1047 (NGENATSSSASA) the composition is skewed to low complexity. Residue threonine 1126 is modified to Phosphothreonine. The disordered stretch occupies residues 1161–1185 (IGSLKENQDENKKFKQRQESSPSQN). The span at 1166–1178 (ENQDENKKFKQRQ) shows a compositional bias: basic and acidic residues. 2 consecutive Fibronectin type-III domains span residues 1244-1341 (VQST…TCLP) and 1346-1457 (APSA…DPAA). Residues 1458–1500 (AKQHTPTVTPNLKRGPEKSTIGSSNIANTFCSPHKRGRNGLHD) form a disordered region. The Bipartite nuclear localization signal motif lies at 1470–1495 (KRGPEKSTIGSSNIANTFCSPHKRGR). A compositionally biased stretch (polar residues) spans 1477–1488 (TIGSSNIANTFC). At serine 1489 the chain carries Phosphoserine. Residues 1490–1500 (PHKRGRNGLHD) are compositionally biased toward basic residues.

As to quaternary structure, core component of several methyltransferase-containing complexes. Component of the SET1 complex, composed at least of the catalytic subunit Set1, wds/WDR5, Wdr82, Rbbp5, ash2, Cfp1/CXXC1, hcf and Dpy-30L1. Component of the MLL3/4 complex composed at least of the catalytic subunit trr, ash2, Rbbp5, Dpy-30L1, wds, hcf, ptip, Pa1, Utx, Lpt and Ncoa6. Component of the Ada2a-containing (ATAC) complex composed of at least Ada2a, Atac1, Hcf, Ada3, Gcn5, Mocs2B, Charac-14, Atac3, Atac2, NC2beta and wds. Post-translationally, proteolytic cleavage occurs between amino acids 900 and 1100 within the non-conserved central region, giving rise to two independent but tightly associated N- and C-terminal subunits.

It is found in the nucleus. In terms of biological role, may be involved in control of the cell cycle. This is Host cell factor from Drosophila melanogaster (Fruit fly).